The following is a 291-amino-acid chain: Inactive dihydropteroate synthase 2 (291 aa).

In terms of domain architecture, Pterin-binding spans 15–272 (QLIMAIVNRT…EVVATRRVLE (258 aa)).

The protein belongs to the DHPS family. In terms of assembly, homodimer.

Its function is as follows. Has very low affinity for the DHPS substrate 6-hydroxymethyl-7,8-dihydropterin-pyrophosphate, but can bind the inhibitor dapsone. Seems to lack dihydropteroate synthase activity, and does probably not function in folate metabolism. The chain is Inactive dihydropteroate synthase 2 (folP2) from Mycobacterium leprae (strain TN).